A 157-amino-acid chain; its full sequence is MRVGLGYDVHKLVENRKLILGGVEIPYEKGLLGHSDADVLLHAIMDSLLGACALGDIGRHFPDTDNKFKGISSIKLLEEVNKLIIKNRYIINNIDSVIIAQKPKLAPYIDTMTENISNALNIKIDQINIKATTEEGLGFTGGMLGISSQSICSVIKK.

Asp8 and His10 together coordinate a divalent metal cation. Residues 8 to 10 and 34 to 35 each bind 4-CDP-2-C-methyl-D-erythritol 2-phosphate; these read DVH and HS. An a divalent metal cation-binding site is contributed by His42. Residues 56–58, 61–65, 132–135, and Phe139 each bind 4-CDP-2-C-methyl-D-erythritol 2-phosphate; these read DIG, FPDTD, and TTEE.

It belongs to the IspF family. As to quaternary structure, homotrimer. A divalent metal cation is required as a cofactor.

It carries out the reaction 4-CDP-2-C-methyl-D-erythritol 2-phosphate = 2-C-methyl-D-erythritol 2,4-cyclic diphosphate + CMP. It functions in the pathway isoprenoid biosynthesis; isopentenyl diphosphate biosynthesis via DXP pathway; isopentenyl diphosphate from 1-deoxy-D-xylulose 5-phosphate: step 4/6. Its function is as follows. Involved in the biosynthesis of isopentenyl diphosphate (IPP) and dimethylallyl diphosphate (DMAPP), two major building blocks of isoprenoid compounds. Catalyzes the conversion of 4-diphosphocytidyl-2-C-methyl-D-erythritol 2-phosphate (CDP-ME2P) to 2-C-methyl-D-erythritol 2,4-cyclodiphosphate (ME-CPP) with a corresponding release of cytidine 5-monophosphate (CMP). The protein is 2-C-methyl-D-erythritol 2,4-cyclodiphosphate synthase of Clostridium botulinum (strain Eklund 17B / Type B).